Reading from the N-terminus, the 145-residue chain is Phospholipase A2 phospholipin (145 aa).

The N-terminal stretch at Met1–Arg15 is a signal peptide. Positions 24, 26, and 28 each coordinate Ca(2+). 5 cysteine pairs are disulfide-bonded: Cys25–Cys46, Cys45–Cys84, Cys52–Cys77, Cys75–Cys116, and Cys121–Cys132. The active site involves His49. Asp50 contributes to the Ca(2+) binding site. A propeptide spanning residues Lys124 to Arg128 is cleaved from the precursor.

This sequence belongs to the phospholipase A2 family. Group III subfamily. In terms of assembly, heterodimer composed of a small subunit and a large subunit; disulfid-linked. Ca(2+) serves as cofactor. As to expression, expressed by the venom gland.

It localises to the secreted. The enzyme catalyses a 1,2-diacyl-sn-glycero-3-phosphocholine + H2O = a 1-acyl-sn-glycero-3-phosphocholine + a fatty acid + H(+). Functionally, scorpion venom phospholipase A2 (PLA2) that contains enzymatic activity, but does not inhibit ryanodine receptors in contrary to imperatoxin-1, another heterodimer of P.imperator venom. PLA2 catalyzes the calcium-dependent hydrolysis of the 2-acyl groups in 3-sn-phosphoglycerides. This chain is Phospholipase A2 phospholipin, found in Pandinus imperator (Emperor scorpion).